A 156-amino-acid chain; its full sequence is Protein CROC-4 (156 aa).

The segment at 46–71 (RATSSTTDSSRAPSSPRPPGSTSHCG) is disordered. Over residues 48-59 (TSSTTDSSRAPS) the composition is skewed to low complexity.

Expressed throughout the brain in the thalamus, subthalamic nucleus, corpus callosum, hippocampus, substantia nigra, caudate nucleus, and amygdala.

The protein resides in the nucleus. Functionally, may play a role in FOS signaling pathways involved in development and remodeling of neurons. Promotes transcription of the FOS promoter. The protein is Protein CROC-4 of Homo sapiens (Human).